We begin with the raw amino-acid sequence, 141 residues long: Large ribosomal subunit protein uL11 (141 aa).

Belongs to the universal ribosomal protein uL11 family. As to quaternary structure, part of the ribosomal stalk of the 50S ribosomal subunit. Interacts with L10 and the large rRNA to form the base of the stalk. L10 forms an elongated spine to which L12 dimers bind in a sequential fashion forming a multimeric L10(L12)X complex. Post-translationally, one or more lysine residues are methylated.

In terms of biological role, forms part of the ribosomal stalk which helps the ribosome interact with GTP-bound translation factors. The sequence is that of Large ribosomal subunit protein uL11 from Acetivibrio thermocellus (strain ATCC 27405 / DSM 1237 / JCM 9322 / NBRC 103400 / NCIMB 10682 / NRRL B-4536 / VPI 7372) (Clostridium thermocellum).